Here is a 154-residue protein sequence, read N- to C-terminus: Transcriptional repressor NrdR (154 aa).

A zinc finger spans residues 3–34; it reads CPHCHKNGSRVVDSRPSEDGSFIRRRRECIHC. The region spanning 49–139 is the ATP-cone domain; the sequence is LLVIKKDGTR…VYRQFKDVDA (91 aa).

This sequence belongs to the NrdR family. The cofactor is Zn(2+).

Negatively regulates transcription of bacterial ribonucleotide reductase nrd genes and operons by binding to NrdR-boxes. The protein is Transcriptional repressor NrdR of Limosilactobacillus reuteri (strain DSM 20016) (Lactobacillus reuteri).